Here is a 135-residue protein sequence, read N- to C-terminus: Transcription antitermination protein NusB (135 aa).

Belongs to the NusB family.

Functionally, involved in transcription antitermination. Required for transcription of ribosomal RNA (rRNA) genes. Binds specifically to the boxA antiterminator sequence of the ribosomal RNA (rrn) operons. This chain is Transcription antitermination protein NusB, found in Clostridium acetobutylicum (strain ATCC 824 / DSM 792 / JCM 1419 / IAM 19013 / LMG 5710 / NBRC 13948 / NRRL B-527 / VKM B-1787 / 2291 / W).